We begin with the raw amino-acid sequence, 425 residues long: Serine--tRNA ligase (425 aa).

232 to 234 (TSE) is an L-serine binding site. ATP contacts are provided by residues 263 to 265 (RRE) and Val-279. Glu-286 is a binding site for L-serine. 350 to 353 (EVVS) contacts ATP. Residue Thr-387 coordinates L-serine.

This sequence belongs to the class-II aminoacyl-tRNA synthetase family. Type-1 seryl-tRNA synthetase subfamily. As to quaternary structure, homodimer. The tRNA molecule binds across the dimer.

It localises to the cytoplasm. The catalysed reaction is tRNA(Ser) + L-serine + ATP = L-seryl-tRNA(Ser) + AMP + diphosphate + H(+). It carries out the reaction tRNA(Sec) + L-serine + ATP = L-seryl-tRNA(Sec) + AMP + diphosphate + H(+). The protein operates within aminoacyl-tRNA biosynthesis; selenocysteinyl-tRNA(Sec) biosynthesis; L-seryl-tRNA(Sec) from L-serine and tRNA(Sec): step 1/1. Functionally, catalyzes the attachment of serine to tRNA(Ser). Is also able to aminoacylate tRNA(Sec) with serine, to form the misacylated tRNA L-seryl-tRNA(Sec), which will be further converted into selenocysteinyl-tRNA(Sec). The sequence is that of Serine--tRNA ligase from Methanocella arvoryzae (strain DSM 22066 / NBRC 105507 / MRE50).